The sequence spans 24 residues: Ascaphin-3 (24 aa).

In terms of tissue distribution, expressed by the skin glands.

Its subcellular location is the secreted. In terms of biological role, antimicrobial peptide that shows higher potency against Gram-negative bacteria than against Gram-positive bacteria. Has a very week hemolytic activity. The protein is Ascaphin-3 of Ascaphus truei (Coastal tailed frog).